We begin with the raw amino-acid sequence, 456 residues long: Adenylosuccinate synthetase isozyme 2 (456 aa).

A disordered region spans residues 1-24 (MAFAETNPAASSLPNGDCGRPRAR). Residues 39-45 (GDEGKGK) and 67-69 (GHT) each bind GTP. Catalysis depends on Asp-40, which acts as the Proton acceptor. Positions 40 and 67 each coordinate Mg(2+). A substrate-binding site is contributed by Asp-40. Residues 40–43 (DEGK), 65–68 (NAGH), Thr-162, Arg-176, Asn-255, Thr-270, and Arg-334 each bind IMP. His-68 serves as the catalytic Proton donor. 330–336 (VTTGRKR) serves as a coordination point for substrate. GTP is bound by residues Arg-336, 362–364 (KLD), and 444–447 (GVGK).

It belongs to the adenylosuccinate synthetase family. As to quaternary structure, homodimer. The cofactor is Mg(2+). Widely expressed.

The protein resides in the cytoplasm. It localises to the mitochondrion. The catalysed reaction is IMP + L-aspartate + GTP = N(6)-(1,2-dicarboxyethyl)-AMP + GDP + phosphate + 2 H(+). It participates in purine metabolism; AMP biosynthesis via de novo pathway; AMP from IMP: step 1/2. Inhibited competitively by AMP and IMP and non-competitively by fructose 1,6-bisphosphate. Functionally, plays an important role in the de novo pathway and in the salvage pathway of purine nucleotide biosynthesis. Catalyzes the first committed step in the biosynthesis of AMP from IMP. This chain is Adenylosuccinate synthetase isozyme 2, found in Sus scrofa (Pig).